We begin with the raw amino-acid sequence, 542 residues long: Major facilitator superfamily domain-containing protein 6-like (542 aa).

Transmembrane regions (helical) follow at residues 46 to 66 (LGLS…LALL), 89 to 109 (LLSS…GILV), 198 to 218 (MFFL…PLEW), 246 to 266 (VGAA…FCRI), 272 to 292 (FYSY…LPIY), 321 to 341 (VTVI…LWLM), 352 to 372 (GICL…AGPL), 381 to 401 (WMLV…SFLW), 404 to 424 (WAVM…WWSV), 444 to 464 (FEAF…GFVV), and 469 to 489 (VNVL…ALAV).

Belongs to the major facilitator superfamily. MFSD6 family.

The protein localises to the membrane. In Danio rerio (Zebrafish), this protein is Major facilitator superfamily domain-containing protein 6-like (mfsd6l).